A 364-amino-acid polypeptide reads, in one-letter code: Medium-wave-sensitive opsin 1 (364 aa).

Residues 1 to 52 lie on the Extracellular side of the membrane; the sequence is MAQRWGPHALSGVQAQDAYEDSTQASLFTYTNSNNTRGPFEGPNYHIAPRWV. A required for 11-cis-retinal regeneration region spans residues 17 to 43; that stretch reads DAYEDSTQASLFTYTNSNNTRGPFEGP. Asparagine 34 carries an N-linked (GlcNAc...) asparagine glycan. Residues 53–77 traverse the membrane as a helical segment; it reads YHLTSAWMTIVVIASIFTNGLVLVA. Over 78–89 the chain is Cytoplasmic; that stretch reads TMRFKKLRHPLN. Residues 90-115 traverse the membrane as a helical segment; the sequence is WILVNLAVADLAETVIASTISVVNQV. Topologically, residues 116 to 129 are extracellular; that stretch reads YGYFVLGHPLCVVE. Cysteine 126 and cysteine 203 form a disulfide bridge. The helical transmembrane segment at 130–149 threads the bilayer; it reads GYTVSLCGITGLWSLAIISW. The Cytoplasmic portion of the chain corresponds to 150-168; that stretch reads ERWLVVCKPFGNVRFDAKL. A helical transmembrane segment spans residues 169–192; the sequence is AIVGIVFSWVWSAVWTAPPIFGWS. At 193 to 218 the chain is on the extracellular side; the sequence is RYWPYGLKTSCGPDVFSGTSYPGVQS. A helical membrane pass occupies residues 219 to 246; sequence YMMVLMVTCCITPLSIIVLCYLHVWLAI. Residues 247–268 lie on the Cytoplasmic side of the membrane; it reads RAVAKQQKESESTQKAEKEVTR. A helical membrane pass occupies residues 269 to 292; it reads MVVVMVLAYCLCWGPYAFFACFAT. Topologically, residues 293-300 are extracellular; it reads ANPGYSFH. The chain crosses the membrane as a helical span at residues 301-325; the sequence is PLVAALPAYFAKSATIYNPIIYVFM. N6-(retinylidene)lysine is present on lysine 312. The Cytoplasmic portion of the chain corresponds to 326–364; the sequence is NRQFRNCILQLFGKKVEDSSELSSTSRTEASSVSSVSPA.

Belongs to the G-protein coupled receptor 1 family. Opsin subfamily. In terms of assembly, monomer. Homodimer. Homotetramer. In terms of processing, O-glycosylated. Post-translationally, phosphorylated on some or all of the serine and threonine residues present in the C-terminal region. In terms of tissue distribution, expressed in cone photoreceptor cells.

It is found in the membrane. Functionally, visual pigments are the light-absorbing molecules that mediate vision. They consist of an apoprotein, opsin, covalently linked to cis-retinal. May increase spectral sensitivity in dim light. This Cavia porcellus (Guinea pig) protein is Medium-wave-sensitive opsin 1 (OPN1MW).